Reading from the N-terminus, the 267-residue chain is 4-hydroxy-tetrahydrodipicolinate reductase (267 aa).

NAD(+) is bound at residue glycine 10–methionine 15. Residue arginine 37 coordinates NADP(+). NAD(+)-binding positions include glycine 98 to threonine 100 and alanine 122 to tyrosine 125. The active-site Proton donor/acceptor is the histidine 155. Position 156 (histidine 156) interacts with (S)-2,3,4,5-tetrahydrodipicolinate. The Proton donor role is filled by lysine 159. Position 165-166 (glycine 165–threonine 166) interacts with (S)-2,3,4,5-tetrahydrodipicolinate.

This sequence belongs to the DapB family.

It is found in the cytoplasm. It carries out the reaction (S)-2,3,4,5-tetrahydrodipicolinate + NAD(+) + H2O = (2S,4S)-4-hydroxy-2,3,4,5-tetrahydrodipicolinate + NADH + H(+). It catalyses the reaction (S)-2,3,4,5-tetrahydrodipicolinate + NADP(+) + H2O = (2S,4S)-4-hydroxy-2,3,4,5-tetrahydrodipicolinate + NADPH + H(+). Its pathway is amino-acid biosynthesis; L-lysine biosynthesis via DAP pathway; (S)-tetrahydrodipicolinate from L-aspartate: step 4/4. Functionally, catalyzes the conversion of 4-hydroxy-tetrahydrodipicolinate (HTPA) to tetrahydrodipicolinate. This Pseudoalteromonas translucida (strain TAC 125) protein is 4-hydroxy-tetrahydrodipicolinate reductase.